Here is a 136-residue protein sequence, read N- to C-terminus: Glutaredoxin-C8 (136 aa).

A Glutaredoxin domain is found at 33-135 (SSFVKSTVKA…KLLNIDVKED (103 aa)). Residues cysteine 53 and cysteine 56 are joined by a disulfide bond.

It belongs to the glutaredoxin family. CPYC subfamily.

It localises to the cytoplasm. Functionally, has a glutathione-disulfide oxidoreductase activity in the presence of NADPH and glutathione reductase. Reduces low molecular weight disulfides and proteins. The polypeptide is Glutaredoxin-C8 (GRXC8) (Oryza sativa subsp. japonica (Rice)).